The following is a 363-amino-acid chain: Pyrimidine monooxygenase RutA (363 aa).

FMN is bound by residues isoleucine 49–lysine 50, asparagine 115, glutamate 124, arginine 140–tyrosine 141, and serine 190.

The protein belongs to the NtaA/SnaA/DszA monooxygenase family. RutA subfamily.

The enzyme catalyses uracil + FMNH2 + NADH + O2 = (Z)-3-ureidoacrylate + FMN + NAD(+) + H2O + H(+). It carries out the reaction thymine + FMNH2 + NADH + O2 = (Z)-2-methylureidoacrylate + FMN + NAD(+) + H2O + H(+). Catalyzes the pyrimidine ring opening between N-3 and C-4 by an unusual flavin hydroperoxide-catalyzed mechanism, adding oxygen atoms in the process to yield ureidoacrylate peracid, that immediately reacts with FMN forming ureidoacrylate and FMN-N(5)-oxide. The FMN-N(5)-oxide reacts spontaneously with NADH to produce FMN. Requires the flavin reductase RutF to regenerate FMN in vivo. This chain is Pyrimidine monooxygenase RutA, found in Escherichia coli O44:H18 (strain 042 / EAEC).